The chain runs to 203 residues: uncharacterized protein (203 aa).

Helical transmembrane passes span 60–80, 114–134, and 157–177; these read IIDM…FFLY, WFQL…YFCT, and LQLG…ALIL. 192-199 contributes to the ATP binding site; it reads GAMSEGKT.

It is found in the membrane. This is an uncharacterized protein from Saccharomyces cerevisiae (strain ATCC 204508 / S288c) (Baker's yeast).